A 207-amino-acid polypeptide reads, in one-letter code: Holliday junction branch migration complex subunit RuvA (207 aa).

Residues 1 to 64 are domain I; it reads MIGRLRGNLL…EDAQLLYGFN (64 aa). A domain II region spans residues 65-143; that stretch reads TKNERALFRE…GWGAGDLFTP (79 aa). Residues 144 to 158 are flexible linker; it reads ATDAAPMDDGSEFIT. The interval 159-207 is domain III; that stretch reads SPQSAVDEAVSALIALGYKPQQASKTVSQIAKPDMTSEVLIRESLKSMI.

This sequence belongs to the RuvA family. As to quaternary structure, homotetramer. Forms an RuvA(8)-RuvB(12)-Holliday junction (HJ) complex. HJ DNA is sandwiched between 2 RuvA tetramers; dsDNA enters through RuvA and exits via RuvB. An RuvB hexamer assembles on each DNA strand where it exits the tetramer. Each RuvB hexamer is contacted by two RuvA subunits (via domain III) on 2 adjacent RuvB subunits; this complex drives branch migration. In the full resolvosome a probable DNA-RuvA(4)-RuvB(12)-RuvC(2) complex forms which resolves the HJ.

The protein localises to the cytoplasm. Its function is as follows. The RuvA-RuvB-RuvC complex processes Holliday junction (HJ) DNA during genetic recombination and DNA repair, while the RuvA-RuvB complex plays an important role in the rescue of blocked DNA replication forks via replication fork reversal (RFR). RuvA specifically binds to HJ cruciform DNA, conferring on it an open structure. The RuvB hexamer acts as an ATP-dependent pump, pulling dsDNA into and through the RuvAB complex. HJ branch migration allows RuvC to scan DNA until it finds its consensus sequence, where it cleaves and resolves the cruciform DNA. The chain is Holliday junction branch migration complex subunit RuvA from Aliivibrio fischeri (strain ATCC 700601 / ES114) (Vibrio fischeri).